Consider the following 442-residue polypeptide: Serum response factor-binding protein 1 (442 aa).

Coiled coils occupy residues 55 to 77 and 118 to 140; these read EDAL…AMKE and LLKR…RQNA. 2 disordered regions span residues 137 to 336 and 358 to 442; these read RQNA…LETH and FHSL…TFDD. Basic and acidic residues-rich tracts occupy residues 149–159 and 167–188; these read ASKESQCEDIP and ESQH…DPTT. Lys-202 is covalently cross-linked (Glycyl lysine isopeptide (Lys-Gly) (interchain with G-Cter in SUMO2)). Residue Ser-215 is modified to Phosphoserine. Polar residues predominate over residues 237–247; sequence GNHSQGKASTR. Over residues 266–278 the composition is skewed to acidic residues; it reads VSEEEKEYFDDST. Residues Ser-277, Ser-292, and Ser-294 each carry the phosphoserine modification. Residue Lys-329 forms a Glycyl lysine isopeptide (Lys-Gly) (interchain with G-Cter in SUMO2) linkage. Ser-362 bears the Phosphoserine mark. Residues 367 to 382 show a composition bias toward basic and acidic residues; that stretch reads SRRDPREQAPKNKAPD.

In terms of assembly, interacts with SRF. Forms complexes with SRF and SRF cofactors ARID2, MYOCD and NKX2-5. Interacts with the N-terminus of SLC2A4.

Its subcellular location is the cytoplasm. It is found in the perinuclear region. Its function is as follows. May be involved in regulating transcriptional activation of cardiac genes during the aging process. May play a role in biosynthesis and/or processing of SLC2A4 in adipose cells. The polypeptide is Serum response factor-binding protein 1 (Rattus norvegicus (Rat)).